Consider the following 430-residue polypeptide: 3-phosphoshikimate 1-carboxyvinyltransferase (430 aa).

Lys-20, Ser-21, and Arg-25 together coordinate 3-phosphoshikimate. Residue Lys-20 participates in phosphoenolpyruvate binding. Positions 92 and 120 each coordinate phosphoenolpyruvate. Residues Ser-166, Gln-168, Asp-312, and Lys-339 each coordinate 3-phosphoshikimate. A phosphoenolpyruvate-binding site is contributed by Gln-168. Asp-312 (proton acceptor) is an active-site residue. 2 residues coordinate phosphoenolpyruvate: Arg-343 and Arg-387.

This sequence belongs to the EPSP synthase family. Monomer.

It is found in the cytoplasm. The enzyme catalyses 3-phosphoshikimate + phosphoenolpyruvate = 5-O-(1-carboxyvinyl)-3-phosphoshikimate + phosphate. The protein operates within metabolic intermediate biosynthesis; chorismate biosynthesis; chorismate from D-erythrose 4-phosphate and phosphoenolpyruvate: step 6/7. In terms of biological role, catalyzes the transfer of the enolpyruvyl moiety of phosphoenolpyruvate (PEP) to the 5-hydroxyl of shikimate-3-phosphate (S3P) to produce enolpyruvyl shikimate-3-phosphate and inorganic phosphate. This is 3-phosphoshikimate 1-carboxyvinyltransferase from Lactococcus lactis subsp. cremoris (strain MG1363).